The sequence spans 324 residues: Probable carboxylesterase 9 (324 aa).

Positions 86 to 88 match the Involved in the stabilization of the negatively charged intermediate by the formation of the oxyanion hole motif; sequence HGS. Residues S171, D272, and H302 contribute to the active site.

This sequence belongs to the 'GDXG' lipolytic enzyme family. In terms of tissue distribution, expressed in flowers.

It catalyses the reaction a carboxylic ester + H2O = an alcohol + a carboxylate + H(+). Carboxylesterase acting on esters with varying acyl chain length. The sequence is that of Probable carboxylesterase 9 (CXE9) from Arabidopsis thaliana (Mouse-ear cress).